Here is a 361-residue protein sequence, read N- to C-terminus: Caspase activity and apoptosis inhibitor 1 (361 aa).

A compositionally biased stretch (basic residues) spans 1 to 14; sequence MTGKKSSREKRRKR. 2 disordered regions span residues 1 to 28 and 67 to 100; these read MTGK…APDI and GGSG…GSLQ. A compositionally biased stretch (low complexity) spans 19–28; sequence AAAALAAPDI. Position 89 is a phosphoserine (Ser89). A Phosphothreonine modification is found at Thr90. Lys104 participates in a covalent cross-link: Glycyl lysine isopeptide (Lys-Gly) (interchain with G-Cter in SUMO2). Phosphoserine is present on residues Ser120 and Ser203. 2 disordered regions span residues 198–218 and 230–331; these read DNGM…MGSD and ASSV…DVQP. Acidic residues predominate over residues 199-210; it reads NGMDSDMEEEAD. Residues 234-251 are compositionally biased toward basic and acidic residues; it reads RENKQPEGLELKQGKGED. Positions 272 to 281 are enriched in low complexity; sequence EEAAAPEAPE. Residues 281–311 are a coiled coil; sequence ENTVQSEAGQIDDLEKDIEKSVNEILGLAES. The residue at position 312 (Ser312) is a Phosphoserine.

As to expression, ubiquitous.

Its function is as follows. Anti-apoptotic protein that modulates a caspase-10 dependent mitochondrial caspase-3/9 feedback amplification loop. In Homo sapiens (Human), this protein is Caspase activity and apoptosis inhibitor 1 (CAAP1).